Reading from the N-terminus, the 407-residue chain is Digeranylgeranylglycerophospholipid reductase (407 aa).

A15, E34, C45, A46, G48, R99, A123, D281, G293, and I294 together coordinate FAD.

It belongs to the geranylgeranyl reductase family. DGGGPL reductase subfamily. FAD is required as a cofactor.

It carries out the reaction a 2,3-bis-O-phytanyl-sn-glycerol 1-phospholipid + 8 oxidized 2[4Fe-4S]-[ferredoxin] = a 2,3-bis-O-(geranylgeranyl)-sn-glycerol 1-phospholipid + 8 reduced 2[4Fe-4S]-[ferredoxin] + 16 H(+). The catalysed reaction is 2,3-bis-O-(phytanyl)-sn-glycerol 1-phosphate + 8 oxidized 2[4Fe-4S]-[ferredoxin] = 2,3-bis-O-(geranylgeranyl)-sn-glycerol 1-phosphate + 8 reduced 2[4Fe-4S]-[ferredoxin] + 16 H(+). It catalyses the reaction a 2,3-bis-O-phytanyl-sn-glycerol 1-phospholipid + 8 A = a 2,3-bis-O-(geranylgeranyl)-sn-glycerol 1-phospholipid + 8 AH2. The enzyme catalyses CDP-2,3-bis-O-(geranylgeranyl)-sn-glycerol + 8 AH2 = CDP-2,3-bis-O-(phytanyl)-sn-glycerol + 8 A. It carries out the reaction archaetidylserine + 8 AH2 = 2,3-bis-O-phytanyl-sn-glycero-3-phospho-L-serine + 8 A. Its pathway is membrane lipid metabolism; glycerophospholipid metabolism. Is involved in the reduction of 2,3-digeranylgeranylglycerophospholipids (unsaturated archaeols) into 2,3-diphytanylglycerophospholipids (saturated archaeols) in the biosynthesis of archaeal membrane lipids. Catalyzes the formation of archaetidic acid (2,3-di-O-phytanyl-sn-glyceryl phosphate) from 2,3-di-O-geranylgeranylglyceryl phosphate (DGGGP) via the hydrogenation of each double bond of the isoprenoid chains. Requires the adjacently encoded ferredoxin MA_1485 as the electron donor. Is also probably able to reduce double bonds of geranyl groups in CDP-2,3-bis-O-(geranylgeranyl)-sn-glycerol and archaetidylserine, thus acting at various stages in the biosynthesis of archaeal membrane lipids. This is Digeranylgeranylglycerophospholipid reductase from Methanosarcina acetivorans (strain ATCC 35395 / DSM 2834 / JCM 12185 / C2A).